Consider the following 271-residue polypeptide: Small ribosomal subunit protein uS2 (271 aa).

The segment covering 229–242 has biased composition (basic and acidic residues); that stretch reads KERKGKDAEEELKK. The interval 229–271 is disordered; it reads KERKGKDAEEELKKAAAPKAAPAAEAAPAAEAPAAPVVEAAAE. Residues 243–271 are compositionally biased toward low complexity; the sequence is AAAPKAAPAAEAAPAAEAPAAPVVEAAAE.

Belongs to the universal ribosomal protein uS2 family.

This chain is Small ribosomal subunit protein uS2, found in Nitratidesulfovibrio vulgaris (strain DSM 19637 / Miyazaki F) (Desulfovibrio vulgaris).